Consider the following 339-residue polypeptide: Fructose-1,6-bisphosphatase isozyme 2 (339 aa).

The important for interaction with ALDOA stretch occupies residues D3–D10. Residues V18 and T28–T32 each bind AMP. Mg(2+)-binding residues include D69 and E98. K113–Y114 contacts AMP. Positions 119, 121, and 122 each coordinate Mg(2+). D122 is a substrate binding site. Residue R141 coordinates AMP. Positions K204–K208 match the Nuclear localization signal motif. N213–Y216 lines the substrate pocket. Residues Y216 and Y219 each carry the phosphotyrosine modification. Residues Y245–M249, Y265, and K275 each bind substrate. A Mg(2+)-binding site is contributed by E281.

This sequence belongs to the FBPase class 1 family. In terms of assembly, homotetramer. Interacts with ALDOA; the interaction blocks inhibition by physiological concentrations of AMP and reduces inhibition by Ca(2+). Interacts with alpha-actinin and F-actin. It depends on Mg(2+) as a cofactor.

Its subcellular location is the cell junction. The protein resides in the cytoplasm. The protein localises to the nucleus. It is found in the myofibril. It localises to the sarcomere. Its subcellular location is the z line. It carries out the reaction beta-D-fructose 1,6-bisphosphate + H2O = beta-D-fructose 6-phosphate + phosphate. It participates in carbohydrate biosynthesis; gluconeogenesis. Its activity is regulated as follows. Subject to complex allosteric regulation. The enzyme can assume an active R-state, or an inactive T-state. Intermediate conformations may exist. AMP acts as an allosteric inhibitor. Fructose 2,6-bisphosphate acts as a competitive inhibitor. Strongly inhibited by Ca(2+). In terms of biological role, catalyzes the hydrolysis of fructose 1,6-bisphosphate to fructose 6-phosphate in the presence of divalent cations and probably participates in glycogen synthesis from carbohydrate precursors, such as lactate. The chain is Fructose-1,6-bisphosphatase isozyme 2 (FBP2) from Bos taurus (Bovine).